A 111-amino-acid chain; its full sequence is Large ribosomal subunit protein uL22 (111 aa).

Belongs to the universal ribosomal protein uL22 family. Part of the 50S ribosomal subunit.

In terms of biological role, this protein binds specifically to 23S rRNA; its binding is stimulated by other ribosomal proteins, e.g. L4, L17, and L20. It is important during the early stages of 50S assembly. It makes multiple contacts with different domains of the 23S rRNA in the assembled 50S subunit and ribosome. Its function is as follows. The globular domain of the protein is located near the polypeptide exit tunnel on the outside of the subunit, while an extended beta-hairpin is found that lines the wall of the exit tunnel in the center of the 70S ribosome. The chain is Large ribosomal subunit protein uL22 from Fusobacterium nucleatum subsp. nucleatum (strain ATCC 25586 / DSM 15643 / BCRC 10681 / CIP 101130 / JCM 8532 / KCTC 2640 / LMG 13131 / VPI 4355).